A 100-amino-acid chain; its full sequence is MAKKSMIERDKKRKFLSAKYSIQRQQLKEQINQSLSLDEKAHLYRKLQSLPRNSAPTRITRRCFVTGRPKAVYRDFGLSRHVLREMAHACLLPGVIKASW.

The protein belongs to the universal ribosomal protein uS14 family. In terms of assembly, part of the 30S ribosomal subunit.

Its subcellular location is the plastid. The protein resides in the chloroplast. Functionally, binds 16S rRNA, required for the assembly of 30S particles. The polypeptide is Small ribosomal subunit protein uS14c (Staurastrum punctulatum (Green alga)).